The primary structure comprises 354 residues: 3-isopropylmalate dehydrogenase (354 aa).

76-87 contributes to the NAD(+) binding site; it reads GPRWDGAKERPE. Positions 94, 104, 130, and 215 each coordinate substrate. Aspartate 215, aspartate 239, and aspartate 243 together coordinate Mg(2+). Residue 273-285 coordinates NAD(+); sequence GSAPDIAGKNKAN.

Belongs to the isocitrate and isopropylmalate dehydrogenases family. LeuB type 1 subfamily. In terms of assembly, homodimer. It depends on Mg(2+) as a cofactor. Mn(2+) serves as cofactor.

The protein resides in the cytoplasm. The catalysed reaction is (2R,3S)-3-isopropylmalate + NAD(+) = 4-methyl-2-oxopentanoate + CO2 + NADH. The protein operates within amino-acid biosynthesis; L-leucine biosynthesis; L-leucine from 3-methyl-2-oxobutanoate: step 3/4. In terms of biological role, catalyzes the oxidation of 3-carboxy-2-hydroxy-4-methylpentanoate (3-isopropylmalate) to 3-carboxy-4-methyl-2-oxopentanoate. The product decarboxylates to 4-methyl-2 oxopentanoate. The chain is 3-isopropylmalate dehydrogenase from Bacillus anthracis.